The primary structure comprises 1611 residues: Pentafunctional AROM polypeptide (1611 aa).

Positions 1–391 (MSSSSADVLK…YEEKASVVAD (391 aa)) are 3-dehydroquinate synthase. NAD(+) is bound by residues 47 to 49 (DTN), 84 to 87 (EGAK), 115 to 117 (GGV), and Asp120. Arg131 provides a ligand contact to 7-phospho-2-dehydro-3-deoxy-D-arabino-heptonate. Residue 140-141 (TT) participates in NAD(+) binding. Residues Asp147 and Lys153 each contribute to the 7-phospho-2-dehydro-3-deoxy-D-arabino-heptonate site. Residue Lys162 coordinates NAD(+). Residue Asn163 participates in 7-phospho-2-dehydro-3-deoxy-D-arabino-heptonate binding. Residues 180–183 (FLTT) and Asn191 each bind NAD(+). Glu195 lines the Zn(2+) pocket. 7-phospho-2-dehydro-3-deoxy-D-arabino-heptonate contacts are provided by residues 195 to 198 (EVIK) and Lys257. Residue Glu267 is the Proton acceptor; for 3-dehydroquinate synthase activity of the active site. Residues 271-275 (RNLVN) and His278 each bind 7-phospho-2-dehydro-3-deoxy-D-arabino-heptonate. His278 contacts Zn(2+). The active-site Proton acceptor; for 3-dehydroquinate synthase activity is His282. The 7-phospho-2-dehydro-3-deoxy-D-arabino-heptonate site is built by His294 and Lys363. His294 contributes to the Zn(2+) binding site. The segment at 404–863 (VKAATPTKSP…WDDLQNKIGV (460 aa)) is EPSP synthase. Residue Cys845 is the For EPSP synthase activity of the active site. The tract at residues 892–1093 (DRPIFLIGMR…SVGNPTSFLS (202 aa)) is shikimate kinase. 899–906 (GMRGAGKT) is a binding site for ATP. The interval 1094 to 1318 (LTFPDVTPAL…AAPGQLTARE (225 aa)) is 3-dehydroquinase. The active-site Proton acceptor; for 3-dehydroquinate dehydratase activity is His1220. Lys1248 serves as the catalytic Schiff-base intermediate with substrate; for 3-dehydroquinate dehydratase activity. The tract at residues 1331–1611 (AKKFVLFGSP…RKAVLDKYFA (281 aa)) is shikimate dehydrogenase.

The protein in the N-terminal section; belongs to the sugar phosphate cyclases superfamily. Dehydroquinate synthase family. It in the 2nd section; belongs to the EPSP synthase family. In the 3rd section; belongs to the shikimate kinase family. This sequence in the 4th section; belongs to the type-I 3-dehydroquinase family. The protein in the C-terminal section; belongs to the shikimate dehydrogenase family. As to quaternary structure, homodimer. The cofactor is Zn(2+).

It localises to the cytoplasm. It catalyses the reaction 7-phospho-2-dehydro-3-deoxy-D-arabino-heptonate = 3-dehydroquinate + phosphate. It carries out the reaction 3-dehydroquinate = 3-dehydroshikimate + H2O. The catalysed reaction is shikimate + NADP(+) = 3-dehydroshikimate + NADPH + H(+). The enzyme catalyses shikimate + ATP = 3-phosphoshikimate + ADP + H(+). It catalyses the reaction 3-phosphoshikimate + phosphoenolpyruvate = 5-O-(1-carboxyvinyl)-3-phosphoshikimate + phosphate. It functions in the pathway metabolic intermediate biosynthesis; chorismate biosynthesis; chorismate from D-erythrose 4-phosphate and phosphoenolpyruvate: step 2/7. Its pathway is metabolic intermediate biosynthesis; chorismate biosynthesis; chorismate from D-erythrose 4-phosphate and phosphoenolpyruvate: step 3/7. The protein operates within metabolic intermediate biosynthesis; chorismate biosynthesis; chorismate from D-erythrose 4-phosphate and phosphoenolpyruvate: step 4/7. It participates in metabolic intermediate biosynthesis; chorismate biosynthesis; chorismate from D-erythrose 4-phosphate and phosphoenolpyruvate: step 5/7. It functions in the pathway metabolic intermediate biosynthesis; chorismate biosynthesis; chorismate from D-erythrose 4-phosphate and phosphoenolpyruvate: step 6/7. Functionally, the AROM polypeptide catalyzes 5 consecutive enzymatic reactions in prechorismate polyaromatic amino acid biosynthesis. The sequence is that of Pentafunctional AROM polypeptide from Cryptococcus neoformans var. neoformans serotype D (strain B-3501A) (Filobasidiella neoformans).